We begin with the raw amino-acid sequence, 232 residues long: Large ribosomal subunit protein uL1 (232 aa).

Belongs to the universal ribosomal protein uL1 family. As to quaternary structure, part of the 50S ribosomal subunit.

Functionally, binds directly to 23S rRNA. The L1 stalk is quite mobile in the ribosome, and is involved in E site tRNA release. In terms of biological role, protein L1 is also a translational repressor protein, it controls the translation of the L11 operon by binding to its mRNA. The sequence is that of Large ribosomal subunit protein uL1 from Burkholderia multivorans (strain ATCC 17616 / 249).